A 201-amino-acid polypeptide reads, in one-letter code: Casparian strip membrane protein 2 (201 aa).

Residues 1 to 38 are Cytoplasmic-facing; the sequence is MKSTGEATAINIGETKSASATTVATTKAIQHPKAGLKR. A helical membrane pass occupies residues 39–59; that stretch reads GLAIFDFILRLSAIGAALAAT. At 60-89 the chain is on the extracellular side; the sequence is TTMGTTDQTLPFFTQFFQFQASYDDLPAFS. The helical transmembrane segment at 90 to 110 threads the bilayer; that stretch reads FFVIANAIASGYLFLSLPFSI. The Cytoplasmic portion of the chain corresponds to 111–129; that stretch reads VCIVRPHAMGARLLLVICD. The chain crosses the membrane as a helical span at residues 130–150; that stretch reads TVMVALTIAAAAAAAAIVYLA. Residues 151-175 lie on the Extracellular side of the membrane; that stretch reads HNGNSNANWVAICQQFDDFCQSVSG. The helical transmembrane segment at 176 to 196 threads the bilayer; it reads AVVASFIAAVLFMLMIVLSAF. The Cytoplasmic segment spans residues 197-201; the sequence is SLRKH.

This sequence belongs to the Casparian strip membrane proteins (CASP) family. In terms of assembly, homodimer and heterodimers.

It localises to the cell membrane. Its function is as follows. Regulates membrane-cell wall junctions and localized cell wall deposition. Required for establishment of the Casparian strip membrane domain (CSD) and the subsequent formation of Casparian strips, a cell wall modification of the root endodermis that determines an apoplastic barrier between the intraorganismal apoplasm and the extraorganismal apoplasm and prevents lateral diffusion. This chain is Casparian strip membrane protein 2, found in Vitis vinifera (Grape).